A 242-amino-acid polypeptide reads, in one-letter code: E3 ubiquitin-protein ligase AIRP2 (242 aa).

The RING-type zinc finger occupies 146–184; it reads CGICLEIRNKVVLPTCNHSMCINCYRNWRARSQSCPFCR.

In terms of assembly, interacts with ATP1/SDIRIP1. Expressed in germinating seeds, flower organs and siliques.

The protein resides in the cytoplasm. It is found in the cytosol. The catalysed reaction is S-ubiquitinyl-[E2 ubiquitin-conjugating enzyme]-L-cysteine + [acceptor protein]-L-lysine = [E2 ubiquitin-conjugating enzyme]-L-cysteine + N(6)-ubiquitinyl-[acceptor protein]-L-lysine.. Possesses E3 ubiquitin-protein ligase activity in vitro when associated with the E2 enzyme UBC8 in vitro. Plays combinatory roles with AIRP1 in the positive regulation of the abscisic acid-mediated drought stress response. Plays a positive role in abscisic acid- and high salinity-regulated seed germination through the ubiquitin-proteasome-dependent down-regulation of ATP1/SDIRIP1. The chain is E3 ubiquitin-protein ligase AIRP2 from Arabidopsis thaliana (Mouse-ear cress).